A 253-amino-acid polypeptide reads, in one-letter code: Tryptophan synthase alpha chain (253 aa).

Active-site proton acceptor residues include Glu-47 and Asp-58.

The protein belongs to the TrpA family. Tetramer of two alpha and two beta chains.

The catalysed reaction is (1S,2R)-1-C-(indol-3-yl)glycerol 3-phosphate + L-serine = D-glyceraldehyde 3-phosphate + L-tryptophan + H2O. It functions in the pathway amino-acid biosynthesis; L-tryptophan biosynthesis; L-tryptophan from chorismate: step 5/5. Its function is as follows. The alpha subunit is responsible for the aldol cleavage of indoleglycerol phosphate to indole and glyceraldehyde 3-phosphate. This chain is Tryptophan synthase alpha chain, found in Desulforapulum autotrophicum (strain ATCC 43914 / DSM 3382 / VKM B-1955 / HRM2) (Desulfobacterium autotrophicum).